The following is a 339-amino-acid chain: Methionyl-tRNA formyltransferase (339 aa).

110–113 (SLLP) serves as a coordination point for (6S)-5,6,7,8-tetrahydrofolate.

This sequence belongs to the Fmt family.

It catalyses the reaction L-methionyl-tRNA(fMet) + (6R)-10-formyltetrahydrofolate = N-formyl-L-methionyl-tRNA(fMet) + (6S)-5,6,7,8-tetrahydrofolate + H(+). Functionally, attaches a formyl group to the free amino group of methionyl-tRNA(fMet). The formyl group appears to play a dual role in the initiator identity of N-formylmethionyl-tRNA by promoting its recognition by IF2 and preventing the misappropriation of this tRNA by the elongation apparatus. This Prochlorococcus marinus (strain MIT 9211) protein is Methionyl-tRNA formyltransferase.